The primary structure comprises 359 residues: Glutamine synthetase (359 aa).

The GS beta-grasp domain maps to 28–107; sequence VMAEYIWIDG…VLAACYTADG (80 aa). Residues 114-359 form the GS catalytic domain; sequence HRDACAKLLE…GIITETMFEH (246 aa). S273 is subject to Phosphoserine. T303 carries the post-translational modification Phosphothreonine. S305 is modified (phosphoserine).

It belongs to the glutamine synthetase family. Homooctamer.

The protein resides in the cytoplasm. It catalyses the reaction L-glutamate + NH4(+) + ATP = L-glutamine + ADP + phosphate + H(+). This chain is Glutamine synthetase (gln1), found in Schizosaccharomyces pombe (strain 972 / ATCC 24843) (Fission yeast).